We begin with the raw amino-acid sequence, 508 residues long: Erythropoietin receptor (508 aa).

The N-terminal stretch at 1 to 24 (MDHLGASLWPQVGSLCLLLAGAAW) is a signal peptide. Over 25–250 (APPPNLPDPK…SLLTPSDLDP (226 aa)) the chain is Extracellular. Cysteines 52 and 62 form a disulfide. Residue Asn-76 is glycosylated (N-linked (GlcNAc...) asparagine). A disulfide bridge links Cys-91 with Cys-107. The region spanning 147 to 247 (APVGLVARLA…EPVSLLTPSD (101 aa)) is the Fibronectin type-III domain. The WSXWS motif motif lies at 233–237 (WSAWS). The helical transmembrane segment at 251–273 (LILTLSLILVVILVLLTVLALLS) threads the bilayer. Residues 274-508 (HRRALKQKIW…PLPPSYVACS (235 aa)) are Cytoplasmic-facing. A Glycyl lysine isopeptide (Lys-Gly) (interchain with G-Cter in ubiquitin) cross-link involves residue Lys-281. Residues 282-290 (IWPGIPSPE) carry the Box 1 motif motif. Phosphotyrosine; by JAK2 is present on residues Tyr-368 and Tyr-426. Positions 452–457 (LKYLYL) match the ITIM motif motif. Lys-453 is covalently cross-linked (Glycyl lysine isopeptide (Lys-Gly) (interchain with G-Cter in ubiquitin)). Phosphotyrosine; by JAK2 is present on residues Tyr-454, Tyr-456, Tyr-468, Tyr-485, Tyr-489, and Tyr-504. The tract at residues 454–456 (YLY) is required for high-affinity SOCS3 binding. The tract at residues 467–494 (DYSSGDSQGAQGGLSDGPYSNPYENSLI) is disordered.

Belongs to the type I cytokine receptor family. Type 1 subfamily. In terms of assembly, forms homodimers on EPO stimulation. The tyrosine-phosphorylated form interacts with several SH2 domain-containing proteins including LYN, the adapter protein SH2B2, PTPN6, PTPN11, JAK2, PI3 kinases, STAT5A/B, SOCS3, CRKL. Interacts with INPP5D/SHIP1. SH2B2 binding inhibits the JAK-STAT signaling. Interacts with RHEX; this interaction occurs in a erythropoietin (EPO)-dependent manner. Interacts with ATXN2L. On EPO stimulation, phosphorylated on C-terminal tyrosine residues by JAK2. The phosphotyrosine motifs are also recruitment sites for several SH2-containing proteins and adapter proteins which mediate cell proliferation. Phosphorylation on Tyr-454 is required for PTPN6 interaction, Tyr-426 for PTPN11. Tyr-426 is also required for SOCS3 binding, but Tyr-454/Tyr-456 motif is the preferred binding site. In terms of processing, ubiquitinated by the ECS(SOCS2) complex following ligand-binding and phosphorylation by JAK2, leading to its degradation by the proteasome. Regulation by the ECS(SOCS2) complex acts as a negative feedback loop of erythropoietin-mediated signaling pathway. Ubiquitination at Lys-281 mediates receptor internalization, whereas ubiquitination at Lys-453 promotes trafficking of activated receptors to the lysosomes for degradation. Ubiquitinated by NOSIP; appears to be either multi-monoubiquitinated or polyubiquitinated. Ubiquitination mediates proliferation and survival of EPO-dependent cells. In terms of tissue distribution, erythroid cells and erythroid progenitor cells. As to expression, isoform EPOR-F is the most abundant form in EPO-dependent erythroleukemia cells and in late-stage erythroid progenitors. Isoform EPOR-S and isoform EPOR-T are the predominant forms in bone marrow. In terms of tissue distribution, isoform EPOR-S and isoform EPOR-T are the predominant forms in bone marrow. Isoform EPOR-T is the most abundant from in early-stage erythroid progenitor cells.

Its subcellular location is the cell membrane. It localises to the secreted. Receptor for erythropoietin, which mediates erythropoietin-induced erythroblast proliferation and differentiation. Upon EPO stimulation, EPOR dimerizes triggering the JAK2/STAT5 signaling cascade. In some cell types, can also activate STAT1 and STAT3. May also activate the LYN tyrosine kinase. Functionally, acts as a dominant-negative receptor of EPOR-mediated signaling. This chain is Erythropoietin receptor, found in Homo sapiens (Human).